The primary structure comprises 179 residues: uncharacterized protein (179 aa).

2 stretches are compositionally biased toward polar residues: residues 1 to 37 and 60 to 70; these read PLGA…TNPG and IPTQSTTTFRS. Disordered stretches follow at residues 1–41 and 60–82; these read PLGA…PSAK and IPTQ…PGRR.

In terms of tissue distribution, component of the acid-soluble and acid-insoluble organic matrix of calcified shell layers (at protein level).

The protein localises to the secreted. This is an uncharacterized protein from Haliotis asinina (Donkey's ear abalone).